A 199-amino-acid polypeptide reads, in one-letter code: MYDFLRFFPENLPDLGFKSYVFMLEKPKGCGIVIRANSPEELRKKLRGVKRRAIVGIIGKEAVCREAVMRRRVDVILDWEDRELDYATLKLAAEKDVAIELSLSKFLRTEGYKRMHLFERLRQEIMVIRKFDVPFIVTTAAENQYELRTRKQVETFFKFFGAEIPKARLYAQRLVRRYFDENYIMDGFEVEQLSNSGVV.

It belongs to the eukaryotic/archaeal RNase P protein component 3 family. Consists of a catalytic RNA component and at least 4-5 protein subunits.

The protein resides in the cytoplasm. The catalysed reaction is Endonucleolytic cleavage of RNA, removing 5'-extranucleotides from tRNA precursor.. Its function is as follows. Part of ribonuclease P, a protein complex that generates mature tRNA molecules by cleaving their 5'-ends. This Archaeoglobus fulgidus (strain ATCC 49558 / DSM 4304 / JCM 9628 / NBRC 100126 / VC-16) protein is Ribonuclease P protein component 3.